We begin with the raw amino-acid sequence, 120 residues long: Large ribosomal subunit protein uL29A (120 aa).

Serine 13 and serine 50 each carry phosphoserine.

This sequence belongs to the universal ribosomal protein uL29 family. In terms of assembly, component of the large ribosomal subunit (LSU). Mature yeast ribosomes consist of a small (40S) and a large (60S) subunit. The 40S small subunit contains 1 molecule of ribosomal RNA (18S rRNA) and 33 different proteins (encoded by 57 genes). The large 60S subunit contains 3 rRNA molecules (25S, 5.8S and 5S rRNA) and 46 different proteins (encoded by 81 genes). uL29 is associated with the polypeptide exit tunnel.

The protein resides in the cytoplasm. In terms of biological role, component of the ribosome, a large ribonucleoprotein complex responsible for the synthesis of proteins in the cell. The small ribosomal subunit (SSU) binds messenger RNAs (mRNAs) and translates the encoded message by selecting cognate aminoacyl-transfer RNA (tRNA) molecules. The large subunit (LSU) contains the ribosomal catalytic site termed the peptidyl transferase center (PTC), which catalyzes the formation of peptide bonds, thereby polymerizing the amino acids delivered by tRNAs into a polypeptide chain. The nascent polypeptides leave the ribosome through a tunnel in the LSU and interact with protein factors that function in enzymatic processing, targeting, and the membrane insertion of nascent chains at the exit of the ribosomal tunnel. The polypeptide is Large ribosomal subunit protein uL29A (Saccharomyces cerevisiae (strain ATCC 204508 / S288c) (Baker's yeast)).